The following is a 358-amino-acid chain: 3-isopropylmalate dehydrogenase (358 aa).

Residues R92, R102, R130, and D224 each coordinate substrate. 3 residues coordinate Mg(2+): D224, D248, and D252. 282–294 provides a ligand contact to NAD(+); it reads GSAPDIAGQGIAN.

This sequence belongs to the isocitrate and isopropylmalate dehydrogenases family. LeuB type 1 subfamily. Homodimer. Requires Mg(2+) as cofactor. The cofactor is Mn(2+).

It is found in the cytoplasm. It carries out the reaction (2R,3S)-3-isopropylmalate + NAD(+) = 4-methyl-2-oxopentanoate + CO2 + NADH. The protein operates within amino-acid biosynthesis; L-leucine biosynthesis; L-leucine from 3-methyl-2-oxobutanoate: step 3/4. Catalyzes the oxidation of 3-carboxy-2-hydroxy-4-methylpentanoate (3-isopropylmalate) to 3-carboxy-4-methyl-2-oxopentanoate. The product decarboxylates to 4-methyl-2 oxopentanoate. This chain is 3-isopropylmalate dehydrogenase, found in Bordetella avium (strain 197N).